Consider the following 434-residue polypeptide: Trigger factor (434 aa).

The PPIase FKBP-type domain maps to 163–248 (GDTAVIDFAG…VHDIKRKELP (86 aa)).

It belongs to the FKBP-type PPIase family. Tig subfamily.

It localises to the cytoplasm. The catalysed reaction is [protein]-peptidylproline (omega=180) = [protein]-peptidylproline (omega=0). Involved in protein export. Acts as a chaperone by maintaining the newly synthesized protein in an open conformation. Functions as a peptidyl-prolyl cis-trans isomerase. The polypeptide is Trigger factor (Shouchella clausii (strain KSM-K16) (Alkalihalobacillus clausii)).